The chain runs to 710 residues: multidrug resistance regulator 2 (710 aa).

Residues 11 to 37 (CDACRSRKIKCNRQTPCASCHKSKRDC) constitute a DNA-binding region (zn(2)-C6 fungal-type). 2 helical membrane-spanning segments follow: residues 475-495 (DLVI…LYLF) and 525-545 (LFLA…TNFL).

The protein localises to the nucleus. It localises to the membrane. Functionally, transcription factor that controls the expression of CDR1, the major multidrug efflux pump. Required for yeast cell adherence to silicone substrate and plays a role in virulence. This chain is multidrug resistance regulator 2, found in Candida albicans (strain SC5314 / ATCC MYA-2876) (Yeast).